The following is a 391-amino-acid chain: NADH-quinone oxidoreductase subunit D (391 aa).

The protein belongs to the complex I 49 kDa subunit family. As to quaternary structure, NDH-1 is composed of 14 different subunits. Subunits NuoB, C, D, E, F, and G constitute the peripheral sector of the complex.

It localises to the cell inner membrane. It catalyses the reaction a quinone + NADH + 5 H(+)(in) = a quinol + NAD(+) + 4 H(+)(out). Its function is as follows. NDH-1 shuttles electrons from NADH, via FMN and iron-sulfur (Fe-S) centers, to quinones in the respiratory chain. The immediate electron acceptor for the enzyme in this species is believed to be ubiquinone. Couples the redox reaction to proton translocation (for every two electrons transferred, four hydrogen ions are translocated across the cytoplasmic membrane), and thus conserves the redox energy in a proton gradient. The chain is NADH-quinone oxidoreductase subunit D from Rickettsia conorii (strain ATCC VR-613 / Malish 7).